Reading from the N-terminus, the 188-residue chain is UPF0301 protein Smal_0940 (188 aa).

This sequence belongs to the UPF0301 (AlgH) family.

This Stenotrophomonas maltophilia (strain R551-3) protein is UPF0301 protein Smal_0940.